A 648-amino-acid polypeptide reads, in one-letter code: Nucleoside triphosphatase I (648 aa).

Residues 48 to 213 enclose the Helicase ATP-binding domain; that stretch reads FIGLKNLNSM…NNLIGLLRPN (166 aa). 61–68 lines the ATP pocket; it reads WDTGTGKT. The short motif at 151-154 is the DEXH box element; sequence DEVH. Residues 379-542 form the Helicase C-terminal domain; it reads YIEACRIILN…KINVVFDLLK (164 aa). The interval 468-534 is binding to the cap-specific mRNA (nucleoside-2'-O-)-methyltransferase; it reads DIIILDMPWN…DIIKNKQGKI (67 aa).

The protein belongs to the helicase family. NPH I subfamily. As to quaternary structure, monomer. Interacts (via C-terminus) with RAP94 (via N-terminus). Interacts with the cap-specific mRNA (nucleoside-2'-O-)-methyltransferase.

Its subcellular location is the virion. It carries out the reaction a ribonucleoside 5'-triphosphate + H2O = a ribonucleoside 5'-diphosphate + phosphate + H(+). Its function is as follows. DNA-dependent ATPase required for providing the needed energy to achieve the termination of early transcripts. Acts in concert with the RAP94 subunit of the virion RNA polymerase and the capping enzyme/VTF to catalyze release of UUUUUNU-containing nascent RNA from the elongation complex. NPH-I must bind ssDNA in order to exhibit ATPase activity. The polypeptide is Nucleoside triphosphatase I (NPH1) (Choristoneura fumiferana (Spruce budworm moth)).